The primary structure comprises 460 residues: Tyrosine-protein phosphatase non-receptor type 18 (460 aa).

The region spanning 26–291 is the Tyrosine-protein phosphatase domain; it reads LAGEFSDIQA…RFLYHTVAQM (266 aa). Substrate-binding positions include D197, 229–235, and Q276; that span reads CSAGCGR. Residue C229 is the Phosphocysteine intermediate of the active site. The disordered stretch occupies residues 361 to 460; the sequence is GAPAGAGSGT…RDPPAEWTRV (100 aa). Residues 364 to 378 are compositionally biased toward gly residues; sequence AGAGSGTQTGTGTGT. Y389 is subject to Phosphotyrosine. T393 carries the post-translational modification Phosphothreonine. The residue at position 426 (Y426) is a Phosphotyrosine. A compositionally biased stretch (basic and acidic residues) spans 449-460; it reads GPRDPPAEWTRV.

The protein belongs to the protein-tyrosine phosphatase family. Non-receptor class 4 subfamily. In terms of assembly, interacts with PSTPIP1. Expressed in brain, colon and several tumor-derived cell lines.

The protein localises to the nucleus. Its subcellular location is the cytoplasm. It carries out the reaction O-phospho-L-tyrosyl-[protein] + H2O = L-tyrosyl-[protein] + phosphate. Differentially dephosphorylate autophosphorylated tyrosine kinases which are known to be overexpressed in tumor tissues. The polypeptide is Tyrosine-protein phosphatase non-receptor type 18 (PTPN18) (Homo sapiens (Human)).